The following is a 205-amino-acid chain: Thymidylate kinase (205 aa).

13–20 (GIDGSGKS) provides a ligand contact to ATP.

This sequence belongs to the thymidylate kinase family.

The enzyme catalyses dTMP + ATP = dTDP + ADP. Its function is as follows. Phosphorylation of dTMP to form dTDP in both de novo and salvage pathways of dTTP synthesis. This chain is Thymidylate kinase, found in Leptospira borgpetersenii serovar Hardjo-bovis (strain L550).